The sequence spans 377 residues: Killer cell immunoglobulin-like receptor 2DL4 (377 aa).

An N-terminal signal peptide occupies residues 1–21; the sequence is MSMSPTVIILACLGFFLDQSV. Residues 22–242 lie on the Extracellular side of the membrane; sequence WAHVGGQDKP…FKTGIARHLH (221 aa). 2 Ig-like C2-type domains span residues 44–104 and 139–202; these read GGHV…HPHS and GENV…FHGS. Residues Cys51 and Cys97 are joined by a disulfide bond. Residues Asn141 and Asn175 are each glycosylated (N-linked (GlcNAc...) asparagine). An intrachain disulfide couples Cys146 to Cys195. The helical transmembrane segment at 243–263 threads the bilayer; the sequence is AVIRYSVAIILFTILPFFLLH. Residues 264–377 lie on the Cytoplasmic side of the membrane; sequence RWCSKKKDAA…ASSNVPAAGI (114 aa). A disordered region spans residues 338 to 377; it reads PRALSPAHEHHSQALMGSSRETTALSQTQLASSNVPAAGI. Positions 352–377 are enriched in polar residues; sequence LMGSSRETTALSQTQLASSNVPAAGI.

The protein belongs to the immunoglobulin superfamily. Interacts with peptide-bound HLA-G-B2M heterotrimeric complex. Interacts with ARRB2. As to expression, expressed in decidual NK cells and innate lymphoid cell type I (ILC1). Expressed in a subset of peripheral NK cells.

It localises to the cell membrane. Its subcellular location is the early endosome membrane. Functionally, receptor for non-classical major histocompatibility class Ib HLA-G molecules. Recognizes HLA-G in complex with B2M/beta-2 microglobulin and a nonamer self-peptide (peptide-bound HLA-G-B2M). In decidual NK cells, binds peptide-bound HLA-G-B2M complex and triggers NK cell senescence-associated secretory phenotype as a molecular switch to promote vascular remodeling and fetal growth in early pregnancy. May play a role in balancing tolerance and antiviral-immunity at maternal-fetal interface by keeping in check the effector functions of NK, CD8+ T cells and B cells. Upon interaction with peptide-bound HLA-G-B2M, initiates signaling from the endosomal compartment leading to downstream activation of PRKDC-XRCC5 and AKT1, and ultimately triggering NF-kappa-B-dependent pro-inflammatory response. This is Killer cell immunoglobulin-like receptor 2DL4 from Homo sapiens (Human).